The sequence spans 251 residues: MKKAGLLFLVMIVIAVVASGIGYWKLTGEESDTLRKIVLEECLPNQQQNQNPSPCAEVKPNAGYVVLKDLNGPLQYLLMPTYRINGTESPLLTDPSTPNFFWLAWQARDFMSKKYGQPVPDRAVSLAINSRTGRTQNHFHIHISCIRPDVREQLDKNLANISSRWLPLPGGLRGHEYLARRVTESELVQRSPFMMLAEEVPEAREHMGSYGLAMVRQSDNSFVLLATQRNLLTLNRASAEEIQDHECEILR.

Residues 4–24 traverse the membrane as a helical segment; the sequence is AGLLFLVMIVIAVVASGIGYW.

Belongs to the Cdh family.

The protein resides in the cell inner membrane. The enzyme catalyses a CDP-1,2-diacyl-sn-glycerol + H2O = a 1,2-diacyl-sn-glycero-3-phosphate + CMP + 2 H(+). The protein operates within phospholipid metabolism; CDP-diacylglycerol degradation; phosphatidate from CDP-diacylglycerol: step 1/1. The polypeptide is CDP-diacylglycerol pyrophosphatase (Escherichia coli O8 (strain IAI1)).